The following is a 247-amino-acid chain: Probable transcriptional regulatory protein Gbem_3313 (247 aa).

The protein belongs to the TACO1 family.

It localises to the cytoplasm. This chain is Probable transcriptional regulatory protein Gbem_3313, found in Citrifermentans bemidjiense (strain ATCC BAA-1014 / DSM 16622 / JCM 12645 / Bem) (Geobacter bemidjiensis).